Reading from the N-terminus, the 405-residue chain is Prenyltransferase phqA (405 aa).

Tyrosine 195, lysine 262, and glutamine 332 together coordinate dimethylallyl diphosphate.

It belongs to the tryptophan dimethylallyltransferase family.

It functions in the pathway alkaloid biosynthesis. Functionally, prenyltransferase; part of the gene cluster that mediates the biosynthesis of paraherquamide, a fungal indole alkaloid that belongs to a family of natural products containing a characteristic bicyclo[2.2.2]diazaoctane core. The first steps in the biosynthesis of paraherquamide is the production of the beta-methyl-proline precursor from L-isoleucine. They require oxidation of a terminally hydroxylated L-isoleucine to the corresponding aldehyde by enzymes which have still to be identified. Spontaneous cyclization and dehydration would yield the 4-methyl pyrolline-5-carboxylic acid, which is then reduced by the pyrroline-5-carboxylate reductase phqD leading to the beta-methyl-proline precursor. The next step of paraherquamide biosynthesis involves coupling of beta-methyl-proline and L-tryptophan by the bimodular NRPS phqB, to produce a monooxopiperazine intermediate. The reductase (R) domain of phqB utilizes NADPH for hydride transfer to reduce the thioester bond of the T domain-tethered linear dipeptide to a hemithioaminal intermediate, which spontaneously cleaves the C-S bond to release the aldehyde product. This compound undergoes spontaneous cyclization and dehydration to give a dienamine which is reverse prenylated at C-2 by the reverse prenyltransferase phqJ. The other prenyltransferase present in the cluster, phqI may be a redundant gene in the pathway. During biosynthetic assembly, the key step to produce the polycyclic core is catalyzed by the bifunctional reductase and intramolecular [4+2] Diels-Alderase, phqE, resulting in formation of the [2.2.2] diazaoctane intermediate preparaherquamide. Following formation of preparaherquamide, an indole 2,3-epoxidation-initiated pinacol-like rearrangement is catalyzed by the phqK FAD-dependent monooxygenase. The prenyltransferase phqA, the cytochrome P450 monooxygenase phqL, and the FAD-linked oxidoreductase phqH (or the cytochrome P450 monooxygenase phqM), are proposed to be involved in the formation of the pyran ring. The FAD-dependent monooxygenase phqK is likely responsible for generation of the spiro-oxindole, and the N-methylation is likely mediated by the phqN methyltransferase leading to the isolable natural product paraherquamide F. However, the order of these biosynthetic steps has still to be determined. In late-stage paraherquamide biosynthesis, the third P450 monooxygenase, phqO, is probably responsible for the C-14 hydroxylation, transforming paraherquamide F to paraherquamide G, and paraherquamide E to the final product paraherquamide A. The expansion from the 6-membered ring pyran (in paraherquamides F and G) to the 7-membered dioxepin ring (in paraherquamides A and E) represents a poorly understood but intriguing process that probably involves the 2-oxoglutarate-dependent dioxygenase phqC. Finally, the remaining members of the paraherquamide cluster, including phqI as well as phqM (or phqH), do not have a clearly prescribed role and appear to be redundant. This is Prenyltransferase phqA from Penicillium fellutanum.